A 786-amino-acid chain; its full sequence is E3 ubiquitin-protein ligase pub3 (786 aa).

The C2 domain occupies Met1–Arg109. Disordered regions lie at residues Ile134–Ala225 and Thr263–Asn306. Positions Ser142–Gly193 are enriched in low complexity. The segment covering His204–Gln213 has biased composition (polar residues). The span at Thr214 to Ala225 shows a compositional bias: low complexity. In terms of domain architecture, WW 1 spans Gly236–Ser269. Composition is skewed to polar residues over residues Thr263–Asn285 and Ser295–Gly305. WW domains follow at residues Asn306–Asn339 and Gly364–Leu397. An HECT domain is found at Ser453–Glu786. The active-site Glycyl thioester intermediate is the Cys754.

The catalysed reaction is S-ubiquitinyl-[E2 ubiquitin-conjugating enzyme]-L-cysteine + [acceptor protein]-L-lysine = [E2 ubiquitin-conjugating enzyme]-L-cysteine + N(6)-ubiquitinyl-[acceptor protein]-L-lysine.. Its pathway is protein modification; protein ubiquitination. In terms of biological role, E3 ubiquitin-protein ligase which accepts ubiquitin from an E2 ubiquitin-conjugating enzyme in the form of a thioester and then directly transfers the ubiquitin to targeted substrates. This Schizosaccharomyces pombe (strain 972 / ATCC 24843) (Fission yeast) protein is E3 ubiquitin-protein ligase pub3 (pub3).